A 393-amino-acid chain; its full sequence is 1-deoxy-D-xylulose 5-phosphate reductoisomerase (393 aa).

Residues Thr-10, Gly-11, Ser-12, Ile-13, Arg-37, Gln-38, and Asn-124 each coordinate NADPH. Residue Lys-125 participates in 1-deoxy-D-xylulose 5-phosphate binding. Glu-126 is an NADPH binding site. Asp-150 lines the Mn(2+) pocket. Residues Ser-151, Glu-152, Ser-179, and His-202 each contribute to the 1-deoxy-D-xylulose 5-phosphate site. Mn(2+) is bound at residue Glu-152. NADPH is bound at residue Gly-208. Ser-215, Asn-220, Lys-221, and Glu-224 together coordinate 1-deoxy-D-xylulose 5-phosphate. Glu-224 is a binding site for Mn(2+).

The protein belongs to the DXR family. Mg(2+) serves as cofactor. The cofactor is Mn(2+).

It catalyses the reaction 2-C-methyl-D-erythritol 4-phosphate + NADP(+) = 1-deoxy-D-xylulose 5-phosphate + NADPH + H(+). It participates in isoprenoid biosynthesis; isopentenyl diphosphate biosynthesis via DXP pathway; isopentenyl diphosphate from 1-deoxy-D-xylulose 5-phosphate: step 1/6. In terms of biological role, catalyzes the NADPH-dependent rearrangement and reduction of 1-deoxy-D-xylulose-5-phosphate (DXP) to 2-C-methyl-D-erythritol 4-phosphate (MEP). The protein is 1-deoxy-D-xylulose 5-phosphate reductoisomerase of Cupriavidus taiwanensis (strain DSM 17343 / BCRC 17206 / CCUG 44338 / CIP 107171 / LMG 19424 / R1) (Ralstonia taiwanensis (strain LMG 19424)).